The primary structure comprises 980 residues: Macrophage colony-stimulating factor 1 receptor (980 aa).

Positions 1 to 19 are cleaved as a signal peptide; sequence MGPRALLVLLVATAWHAQG. Residues 20-514 are Extracellular-facing; it reads VPVIQPSGPE…QLPDELLFTP (495 aa). 5 consecutive Ig-like C2-type domains span residues 21–100, 107–197, 202–297, 299–397, and 400–499; these read PVIQ…IHLY, PWKV…KVQK, PATL…RVVE, AYLN…LTLR, and PEVR…WPIS. Cys42 and Cys84 are oxidised to a cystine. N-linked (GlcNAc...) asparagine glycosylation is found at Asn45, Asn73, Asn94, Asn153, Asn275, Asn286, Asn302, Asn335, Asn410, Asn477, and Asn490. Cystine bridges form between Cys127–Cys177 and Cys224–Cys278. Cys417 and Cys482 form a disulfide bridge. A helical transmembrane segment spans residues 515 to 535; sequence VLLTCMSIMALLLLLLLLLLY. Topologically, residues 536–980 are cytoplasmic; it reads KYKQKPKYQV…LLQPNNYQFC (445 aa). Positions 539–571 are regulatory juxtamembrane domain; that stretch reads QKPKYQVRWKIIESYEGNSYTFIDPTQLPYNEK. 2 positions are modified to phosphotyrosine; by autocatalysis: Tyr543 and Tyr558. The Protein kinase domain maps to 579–908; that stretch reads LQFGKTLGAG…PTFQQICSLL (330 aa). ATP is bound by residues 585 to 593 and Lys613; that span reads LGAGAFGKV. Residues Tyr696 and Tyr705 each carry the phosphotyrosine; by autocatalysis modification. A Phosphoserine modification is found at Ser710. Tyr720 carries the phosphotyrosine; by autocatalysis modification. A disordered region spans residues 723 to 743; it reads MRPVSTSSSNDSFSEEDLGKE. Asp776 functions as the Proton acceptor in the catalytic mechanism. Positions 794–816 are activation loop; it reads DFGLARDIMNDSNYIVKGNARLP. 2 positions are modified to phosphotyrosine; by autocatalysis: Tyr807 and Tyr921. A disordered region spans residues 918–959; sequence VPNYTNLPSSSSSSSSSSSSCRTGSGGGSSSEPEEESSSEHL. Residues 926–940 show a composition bias toward low complexity; the sequence is SSSSSSSSSSSSCRT. The residue at position 977 (Tyr977) is a Phosphotyrosine; by autocatalysis.

The protein belongs to the protein kinase superfamily. Tyr protein kinase family. CSF-1/PDGF receptor subfamily. Monomer. Homodimer. Interacts with CSF1 and IL34. Interaction with dimeric CSF1 or IL34 leads to receptor homodimerization. Interacts with INPPL1/SHIP2 and THOC5. Interacts (tyrosine phosphorylated) with PLCG2 (via SH2 domain). Interacts (tyrosine phosphorylated) with PIK3R1 (via SH2 domain). Interacts (tyrosine phosphorylated) with FYN, YES1 and SRC (via SH2 domain). Interacts (tyrosine phosphorylated) with CBL, GRB2 and SLA2. Autophosphorylated in response to CSF1 or IL34 binding. Phosphorylation at Tyr-558 is important for normal down-regulation of signaling by ubiquitination, internalization and degradation. Phosphorylation at Tyr-558 and Tyr-807 is important for interaction with SRC family members, including FYN, YES1 and SRC, and for subsequent activation of these protein kinases. Phosphorylation at Tyr-696 and Tyr-921 is important for interaction with GRB2. Phosphorylation at Tyr-720 is important for interaction with PIK3R1. Phosphorylation at Tyr-720 and Tyr-807 is important for interaction with PLCG2. Phosphorylation at Tyr-977 is important for interaction with CBL. Dephosphorylation by PTPN2 negatively regulates downstream signaling and macrophage differentiation. In terms of processing, ubiquitinated. Becomes rapidly polyubiquitinated after autophosphorylation, leading to its degradation.

It is found in the cell membrane. It carries out the reaction L-tyrosyl-[protein] + ATP = O-phospho-L-tyrosyl-[protein] + ADP + H(+). Present in an inactive conformation in the absence of bound ligand. CSF1 or IL34 binding leads to dimerization and activation by autophosphorylation on tyrosine residues. Functionally, tyrosine-protein kinase that acts as a cell-surface receptor for CSF1 and IL34 and plays an essential role in the regulation of survival, proliferation and differentiation of hematopoietic precursor cells, especially mononuclear phagocytes, such as macrophages and monocytes. Promotes the release of pro-inflammatory chemokines in response to IL34 and CSF1, and thereby plays an important role in innate immunity and in inflammatory processes. Plays an important role in the regulation of osteoclast proliferation and differentiation, the regulation of bone resorption, and is required for normal bone and tooth development. Required for normal male and female fertility, and for normal development of milk ducts and acinar structures in the mammary gland during pregnancy. Promotes reorganization of the actin cytoskeleton, regulates formation of membrane ruffles, cell adhesion and cell migration, and promotes cancer cell invasion. Activates several signaling pathways in response to ligand binding, including the ERK1/2 and the JNK pathway. Phosphorylates PIK3R1, PLCG2, GRB2, SLA2 and CBL. Activation of PLCG2 leads to the production of the cellular signaling molecules diacylglycerol and inositol 1,4,5-trisphosphate, that then lead to the activation of protein kinase C family members, especially PRKCD. Phosphorylation of PIK3R1, the regulatory subunit of phosphatidylinositol 3-kinase, leads to activation of the AKT1 signaling pathway. Activated CSF1R also mediates activation of the MAP kinases MAPK1/ERK2 and/or MAPK3/ERK1, and of the SRC family kinases SRC, FYN and YES1. Activated CSF1R transmits signals both via proteins that directly interact with phosphorylated tyrosine residues in its intracellular domain, or via adapter proteins, such as GRB2. Promotes activation of STAT family members STAT3, STAT5A and/or STAT5B. Promotes tyrosine phosphorylation of SHC1 and INPP5D/SHIP-1. Receptor signaling is down-regulated by protein phosphatases, such as INPP5D/SHIP-1, that dephosphorylate the receptor and its downstream effectors, and by rapid internalization of the activated receptor. In the central nervous system, may play a role in the development of microglia macrophages. This chain is Macrophage colony-stimulating factor 1 receptor (CSF1R), found in Felis catus (Cat).